The sequence spans 603 residues: Keratin, type II cuticular Hb4 (603 aa).

The interval Met1 to Glu173 is head. An IF rod domain is found at Glu173–Ile484. The coil 1A stretch occupies residues Lys174 to Leu208. Residues Gln209–Leu218 are linker 1. Residues Glu219 to Ser319 form a coil 1B region. Residues His320 to Leu336 are linker 12. Positions Asn337–Glu480 are coil 2. The segment at Glu481 to Tyr603 is tail. Residues Cys579–Tyr603 are disordered.

This sequence belongs to the intermediate filament family. As to quaternary structure, heterotetramer of two type I and two type II keratins. In terms of tissue distribution, in skin, only expressed in the suprabasal cells of tail scale epidermis. Suprabasally expressed in stratified squamous epithelia and also in the posterior unit of the complex filiform papillae of tongue. Expressed in rare anatomical sites in which an orthokeratinized stratum corneum would be too soft and a hard keratinized structure would be too rigid to meet the functional requirement of the respective epithelia.

This is Keratin, type II cuticular Hb4 (Krt84) from Mus musculus (Mouse).